The chain runs to 634 residues: Threonine--tRNA ligase (634 aa).

Residues 1–142 (MQLLLIHSDY…LSRSIRPEGA (142 aa)) are editing domain. The catalytic stretch occupies residues 214–513 (PHVELMRRLE…TEEGKVPMLP (300 aa)). C306, H358, and H482 together coordinate Zn(2+).

This sequence belongs to the class-II aminoacyl-tRNA synthetase family. As to quaternary structure, homodimer. The cofactor is Zn(2+).

The protein localises to the cytoplasm. The catalysed reaction is tRNA(Thr) + L-threonine + ATP = L-threonyl-tRNA(Thr) + AMP + diphosphate + H(+). In terms of biological role, catalyzes the attachment of threonine to tRNA(Thr) in a two-step reaction: L-threonine is first activated by ATP to form Thr-AMP and then transferred to the acceptor end of tRNA(Thr). Edits incorrectly charged L-seryl-tRNA(Thr) probably via its editing domain (tested with total bovine tRNA). Activates L-serine, but does not detectably transfer it to tRNA (tested with total bovine tRNA). The protein is Threonine--tRNA ligase of Methanosarcina mazei (strain ATCC BAA-159 / DSM 3647 / Goe1 / Go1 / JCM 11833 / OCM 88) (Methanosarcina frisia).